Consider the following 942-residue polypeptide: Leucine--tRNA ligase (942 aa).

Positions 41–51 (PYLNGVLHAGH) match the 'HIGH' region motif. The short motif at 633–637 (KLSKS) is the 'KMSKS' region element. Lys-636 serves as a coordination point for ATP.

The protein belongs to the class-I aminoacyl-tRNA synthetase family.

The protein localises to the cytoplasm. The enzyme catalyses tRNA(Leu) + L-leucine + ATP = L-leucyl-tRNA(Leu) + AMP + diphosphate. This Methanocaldococcus jannaschii (strain ATCC 43067 / DSM 2661 / JAL-1 / JCM 10045 / NBRC 100440) (Methanococcus jannaschii) protein is Leucine--tRNA ligase.